A 406-amino-acid chain; its full sequence is UPF0754 membrane protein Cyan7425_4067 (406 aa).

The helical transmembrane segment at 381-401 (IVTLGGVLGLLIGIAQSVLLL) threads the bilayer.

This sequence belongs to the UPF0754 family.

Its subcellular location is the cell inner membrane. This is UPF0754 membrane protein Cyan7425_4067 from Cyanothece sp. (strain PCC 7425 / ATCC 29141).